A 332-amino-acid chain; its full sequence is Fructose-1,6-bisphosphatase class 1 (332 aa).

Mg(2+) contacts are provided by glutamate 93, aspartate 113, leucine 115, and aspartate 116. Substrate contacts are provided by residues 116 to 119 (DGSS), asparagine 209, tyrosine 235, and lysine 272. Glutamate 278 contacts Mg(2+).

This sequence belongs to the FBPase class 1 family. As to quaternary structure, homotetramer. Requires Mg(2+) as cofactor.

It localises to the cytoplasm. It carries out the reaction beta-D-fructose 1,6-bisphosphate + H2O = beta-D-fructose 6-phosphate + phosphate. It functions in the pathway carbohydrate biosynthesis; gluconeogenesis. The chain is Fructose-1,6-bisphosphatase class 1 from Syntrophus aciditrophicus (strain SB).